We begin with the raw amino-acid sequence, 315 residues long: Probable cell division protein WhiA (315 aa).

The segment at residues 278-312 (SLSDLAGMIEGQELTKSGINHRMRKLMQIVKELNH) is a DNA-binding region (H-T-H motif).

The protein belongs to the WhiA family.

Involved in cell division and chromosome segregation. The polypeptide is Probable cell division protein WhiA (Oenococcus oeni (strain ATCC BAA-331 / PSU-1)).